Reading from the N-terminus, the 336-residue chain is Major histocompatibility complex class I-related protein 1 (336 aa).

The first 18 residues, 1–18 (MMLLLPLIIVLMMKLSDA), serve as a signal peptide directing secretion. Positions 19–105 (RTHSLRYFRL…KQLQHHYNHS (87 aa)) are alpha-1. Positions 19–197 (RTHSLRYFRL…EYGKDALQRT (179 aa)) are antigen-binding cleft. Topologically, residues 19 to 298 (RTHSLRYFRL…QESETILLVV (280 aa)) are extracellular. The 8-(9H-purin-6-yl)-2-oxa-8-azabicyclo[3.3.1]nona-3,6-diene-4,6-dicarbaldehyde site is built by Tyr-25 and Arg-27. 3 residues coordinate 5-(2-oxoethylideneamino)-6-(D-ribitylamino)uracil: Arg-27, Ser-42, and Lys-61. 3 residues coordinate 5-(2-oxopropylideneamino)-6-(D-ribitylamino)uracil: Arg-27, Ser-42, and Lys-61. Positions 27, 42, and 61 each coordinate 7-hydroxy-6-methyl-8-(1-D-ribityl)lumazine. 2 residues coordinate 8-(9H-purin-6-yl)-2-oxa-8-azabicyclo[3.3.1]nona-3,6-diene-4,6-dicarbaldehyde: Lys-61 and His-76. A 2-amino-4-oxopteridine-6-carbaldehyde-binding site is contributed by Lys-61. Position 61 (Lys-61) interacts with pyridoxal. Asn-103 carries N-linked (GlcNAc...) asparagine glycosylation. Positions 106 to 197 (GFHTYQRMIG…EYGKDALQRT (92 aa)) are alpha-2. Residue Arg-112 participates in 8-(9H-purin-6-yl)-2-oxa-8-azabicyclo[3.3.1]nona-3,6-diene-4,6-dicarbaldehyde binding. 5-(2-oxoethylideneamino)-6-(D-ribitylamino)uracil contacts are provided by Arg-112, Tyr-170, and Gln-171. The 5-(2-oxopropylideneamino)-6-(D-ribitylamino)uracil site is built by Arg-112, Tyr-170, and Gln-171. 7-hydroxy-6-methyl-8-(1-D-ribityl)lumazine contacts are provided by Arg-112, Tyr-170, and Gln-171. Cystine bridges form between Cys-116–Cys-179 and Cys-218–Cys-274. Residues 198–289 (EPPKVRVNHK…GVHMVLQGFQ (92 aa)) form an alpha-3 region. In terms of domain architecture, Ig-like C1-type spans 200–295 (PKVRVNHKET…QGFQESETIL (96 aa)). Positions 290–298 (ESETILLVV) are connecting peptide. Residues 299-319 (KAVGFIVLAIALAGVGILAWR) traverse the membrane as a helical segment. The Cytoplasmic portion of the chain corresponds to 320–336 (KRPRGKNKVICLSTPEH).

Belongs to the MHC class I family. As to quaternary structure, heterotrimer that consists of MR1, B2M and metabolite antigen. Major classes of metabolite ligands presented by MR1 include riboflavin-related antigens, pyrimidines and ribityl lumazines, nucleobase adducts and folate derivatives. Forms reversible covalent Schiff base complexes with microbial pyrimidine-based metabolite, which serves as a molecular switch triggering complete folding, stable association with B2M and translocation of the ternary complex from endoplasmic reticulum to the plasma membrane. Alternatively, forms non-Schiff base complexes with ribityl lumazines. On antigen-presenting cells, the ternary complex interacts with TCR on MR1-restricted T cells. Interacts with TAPBP and TAPBPL chaperones in the endoplasmic reticulum. TAPBP associated or not with MHC class I peptide loading complex binds ligand-free MR1 or MR1-B2M complex, providing for stable MR1 pools ready for metabolite antigen processing. TAPBPL interacts with MR1 in a ligand-independent way; this interaction may stabilize MR1 pool and facilitate ligand loading and dissociation. Structurally, MR1-B2M heterodimer adopts a topology similar to classical MHC class I molecules, with alpha-1 and alpha-2 domains of MR1 forming the antigen-binding cleft composed of two alpha-helices resting on a floor of 7-stranded anti-parallel beta-pleated sheet. MR1-B2M heterodimer (via alpha-helices) interacts with TCR (via CDR domains). N-glycosylated.

It localises to the cell membrane. Its subcellular location is the endoplasmic reticulum membrane. The protein resides in the golgi apparatus membrane. It is found in the early endosome membrane. The protein localises to the late endosome membrane. In terms of biological role, antigen-presenting molecule specialized in displaying microbial pyrimidine-based metabolites to alpha-beta T cell receptors (TCR) on innate-type mucosal-associated invariant T (MAIT) cells. In complex with B2M preferentially presents riboflavin-derived metabolites to semi-invariant TCRs on MAIT cells, guiding immune surveillance of the microbial metabolome at mucosal epithelial barriers. Signature pyrimidine-based microbial antigens are generated via non-enzymatic condensation of metabolite intermediates of the riboflavin pathway with by-products arising from other metabolic pathways such as glycolysis. Typical potent antigenic metabolites are 5-(2-oxoethylideneamino)-6-D-ribitylaminouracil (5-OE-RU) and 5-(2-oxopropylideneamino)-6-D-ribitylaminouracil (5-OP-RU), products of condensation of 5-amino-6-D-ribityaminouracil (5-A-RU) with glyoxal or methylglyoxal by-products, respectively. May present microbial antigens to various MAIT cell subsets, providing for unique recognition of diverse microbes, including pathogens that do not synthesize riboflavin. Upon antigen recognition, elicits rapid innate-type MAIT cell activation to eliminate pathogenic microbes by directly killing infected cells. During T cell development, drives thymic selection and post-thymic terminal differentiation of MAIT cells in a process dependent on commensal microflora. Acts as an immune sensor of cancer cell metabolome. May present a tumor-specific or -associated metabolite essential for cancer cell survival to a pan-cancer TCR on a non-MAIT CD8-positive T cell clone, triggering T cell-mediated killing of a wide range of cancer cell types. May present tumor-enriched pyridoxal and pyridoxal 5'-phosphate antigens, enabling preferential recognition of cancer cells. Presents nucleobase carbonyl adducts generated during oxidative stress. Captures M3Ade, a nucleobase adduct composed of one adenine modified by a malondialdehyde trimer, for recognition by MR1-restricted T cell clones expressing a polyclonal TCR repertoire. This chain is Major histocompatibility complex class I-related protein 1, found in Bos taurus (Bovine).